The chain runs to 176 residues: Probable DNA-directed RNA polymerase subunit delta (176 aa).

In terms of domain architecture, HTH HARE-type spans 14-81; it reads CSMIEVVHSV…GENRWGLRSW (68 aa). The interval 90-176 is disordered; sequence EILPQPKPKK…ETEEEEEEEL (87 aa). The segment covering 106 to 176 has biased composition (acidic residues); sequence DGFDDYIEED…ETEEEEEEEL (71 aa).

It belongs to the RpoE family. In terms of assembly, RNAP is composed of a core of 2 alpha, a beta and a beta' subunits. The core is associated with a delta subunit and one of several sigma factors.

Its function is as follows. Participates in both the initiation and recycling phases of transcription. In the presence of the delta subunit, RNAP displays an increased specificity of transcription, a decreased affinity for nucleic acids, and an increased efficiency of RNA synthesis because of enhanced recycling. This is Probable DNA-directed RNA polymerase subunit delta from Bacillus thuringiensis subsp. konkukian (strain 97-27).